The sequence spans 428 residues: Histidinol dehydrogenase (428 aa).

Positions 234, 256, and 259 each coordinate substrate. The Zn(2+) site is built by glutamine 256 and histidine 259. Catalysis depends on proton acceptor residues glutamate 323 and histidine 324. Substrate contacts are provided by histidine 324, aspartate 357, glutamate 411, and histidine 416. Aspartate 357 provides a ligand contact to Zn(2+). Position 416 (histidine 416) interacts with Zn(2+).

Belongs to the histidinol dehydrogenase family. It depends on Zn(2+) as a cofactor.

The enzyme catalyses L-histidinol + 2 NAD(+) + H2O = L-histidine + 2 NADH + 3 H(+). It functions in the pathway amino-acid biosynthesis; L-histidine biosynthesis; L-histidine from 5-phospho-alpha-D-ribose 1-diphosphate: step 9/9. Its function is as follows. Catalyzes the sequential NAD-dependent oxidations of L-histidinol to L-histidinaldehyde and then to L-histidine. The chain is Histidinol dehydrogenase from Campylobacter jejuni subsp. jejuni serotype O:2 (strain ATCC 700819 / NCTC 11168).